The chain runs to 188 residues: Elongation factor P (188 aa).

Position 34 is an N6-(3,6-diaminohexanoyl)-5-hydroxylysine (K34).

This sequence belongs to the elongation factor P family. May be beta-lysylated on the epsilon-amino group of Lys-34 by the combined action of EpmA and EpmB, and then hydroxylated on the C5 position of the same residue by EpmC (if this protein is present). Lysylation is critical for the stimulatory effect of EF-P on peptide-bond formation. The lysylation moiety may extend toward the peptidyltransferase center and stabilize the terminal 3-CCA end of the tRNA. Hydroxylation of the C5 position on Lys-34 may allow additional potential stabilizing hydrogen-bond interactions with the P-tRNA.

It localises to the cytoplasm. It participates in protein biosynthesis; polypeptide chain elongation. In terms of biological role, involved in peptide bond synthesis. Alleviates ribosome stalling that occurs when 3 or more consecutive Pro residues or the sequence PPG is present in a protein, possibly by augmenting the peptidyl transferase activity of the ribosome. Modification of Lys-34 is required for alleviation. The polypeptide is Elongation factor P (Photobacterium profundum (strain SS9)).